The primary structure comprises 165 residues: NADPH-dependent 7-cyano-7-deazaguanine reductase (165 aa).

Cys56 acts as the Thioimide intermediate in catalysis. The active-site Proton donor is the Asp63. Substrate contacts are provided by residues 78–80 (VES) and 97–98 (HE).

It belongs to the GTP cyclohydrolase I family. QueF type 1 subfamily.

Its subcellular location is the cytoplasm. The enzyme catalyses 7-aminomethyl-7-carbaguanine + 2 NADP(+) = 7-cyano-7-deazaguanine + 2 NADPH + 3 H(+). It participates in tRNA modification; tRNA-queuosine biosynthesis. Its function is as follows. Catalyzes the NADPH-dependent reduction of 7-cyano-7-deazaguanine (preQ0) to 7-aminomethyl-7-deazaguanine (preQ1). This is NADPH-dependent 7-cyano-7-deazaguanine reductase from Bacillus cereus (strain ATCC 14579 / DSM 31 / CCUG 7414 / JCM 2152 / NBRC 15305 / NCIMB 9373 / NCTC 2599 / NRRL B-3711).